The sequence spans 252 residues: tRNA pseudouridine synthase A (252 aa).

Asp52 serves as the catalytic Nucleophile. Tyr110 contacts substrate.

Belongs to the tRNA pseudouridine synthase TruA family. Homodimer.

The enzyme catalyses uridine(38/39/40) in tRNA = pseudouridine(38/39/40) in tRNA. Its function is as follows. Formation of pseudouridine at positions 38, 39 and 40 in the anticodon stem and loop of transfer RNAs. The sequence is that of tRNA pseudouridine synthase A from Blochmanniella floridana.